The primary structure comprises 92 residues: Protamine-2 (92 aa).

Residues 1–76 (MVRCRVRSPS…RRACRHRRHR (76 aa)) are disordered. The span at 7–20 (RSPSESPQQGSGQQ) shows a compositional bias: low complexity. Residues S8 and S10 each carry the phosphoserine modification. A compositionally biased stretch (basic and acidic residues) spans 21–36 (RENERQDQDQELRPED). Residues 42 to 76 (RTHRGRYHYRHRSHTRRRRSCRRRRRRACRHRRHR) are compositionally biased toward basic residues.

This sequence belongs to the protamine P2 family. In terms of assembly, interacts with TDRP. Proteolytic processing into mature chains is required for histone eviction during spermatogenesis. Transition proteins (TNP1 and TNP2) are required for processing. Testis.

The protein resides in the nucleus. Its subcellular location is the chromosome. Protamines substitute for histones in the chromatin of sperm during the haploid phase of spermatogenesis. They compact sperm DNA into a highly condensed, stable and inactive complex. The polypeptide is Protamine-2 (PRM2) (Sus scrofa (Pig)).